Consider the following 850-residue polypeptide: Protein argonaute 8 (850 aa).

Residues 1 to 30 (MDTTLPPPQHMEREPLKSKSSLLPMTRRGN) are disordered. One can recognise a PAZ domain in the interval 247–361 (PVVDFLIANQ…FPIELCELVS (115 aa)). The Piwi domain maps to 518–811 (QSILGEVPPK…AAAQMATAMK (294 aa)).

It belongs to the argonaute family. Ago subfamily.

Its function is as follows. Involved in RNA-mediated post-transcriptional gene silencing (PTGS). Main component of the RNA-induced silencing complex (RISC) that binds to a short guide RNA such as a microRNA (miRNA) or small interfering RNA (siRNA). RISC uses the mature miRNA or siRNA as a guide for slicer-directed cleavage of homologous mRNAs to repress gene expression. The polypeptide is Protein argonaute 8 (AGO8) (Arabidopsis thaliana (Mouse-ear cress)).